The chain runs to 232 residues: Ribonuclease 3 (232 aa).

The 123-residue stretch at 9–131 folds into the RNase III domain; sequence INLLQKKLGY…IIGGIFLDSN (123 aa). Residue glutamate 44 participates in Mg(2+) binding. Aspartate 48 is a catalytic residue. The Mg(2+) site is built by aspartate 117 and glutamate 120. The active site involves glutamate 120. The 71-residue stretch at 158–228 folds into the DRBM domain; that stretch reads DPKTRLQEYL…AENALKFLIE (71 aa).

This sequence belongs to the ribonuclease III family. Homodimer. Mg(2+) is required as a cofactor.

The protein resides in the cytoplasm. The enzyme catalyses Endonucleolytic cleavage to 5'-phosphomonoester.. Functionally, digests double-stranded RNA. Involved in the processing of primary rRNA transcript to yield the immediate precursors to the large and small rRNAs (23S and 16S). Processes some mRNAs, and tRNAs when they are encoded in the rRNA operon. Processes pre-crRNA and tracrRNA of type II CRISPR loci if present in the organism. This is Ribonuclease 3 from Blochmanniella floridana.